A 243-amino-acid chain; its full sequence is uncharacterized protein (243 aa).

Positions 26-204 (RVGLVLDITG…ISDDELYDAL (179 aa)) constitute a VWFA domain. Residues 222–243 (REQEPPAEKPKKKGFFSRLFSK) form a disordered region. Residues 231-243 (PKKKGFFSRLFSK) are compositionally biased toward basic residues.

This is an uncharacterized protein from Bacillus subtilis (strain 168).